The chain runs to 256 residues: Small ribosomal subunit protein eS1A (256 aa).

A2 is subject to N-acetylalanine; partial.

It belongs to the eukaryotic ribosomal protein eS1 family. In terms of assembly, component of the small ribosomal subunit. Mature ribosomes consist of a small (40S) and a large (60S) subunit. The 40S subunit contains about 33 different proteins and 1 molecule of RNA (18S). The 60S subunit contains about 49 different proteins and 3 molecules of RNA (25S, 5.8S and 5S).

The protein localises to the cytoplasm. This chain is Small ribosomal subunit protein eS1A, found in Scheffersomyces stipitis (strain ATCC 58785 / CBS 6054 / NBRC 10063 / NRRL Y-11545) (Yeast).